A 276-amino-acid polypeptide reads, in one-letter code: Diaminopimelate epimerase (276 aa).

Positions 13, 46, and 66 each coordinate substrate. The Proton donor role is filled by Cys-75. Substrate-binding positions include 76–77 (GN), Asn-159, Asn-192, and 210–211 (ER). Cys-219 serves as the catalytic Proton acceptor. A substrate-binding site is contributed by 220–221 (GT).

This sequence belongs to the diaminopimelate epimerase family. Homodimer.

The protein localises to the cytoplasm. The catalysed reaction is (2S,6S)-2,6-diaminopimelate = meso-2,6-diaminopimelate. It participates in amino-acid biosynthesis; L-lysine biosynthesis via DAP pathway; DL-2,6-diaminopimelate from LL-2,6-diaminopimelate: step 1/1. In terms of biological role, catalyzes the stereoinversion of LL-2,6-diaminopimelate (L,L-DAP) to meso-diaminopimelate (meso-DAP), a precursor of L-lysine and an essential component of the bacterial peptidoglycan. This is Diaminopimelate epimerase from Pseudomonas syringae pv. tomato (strain ATCC BAA-871 / DC3000).